An 86-amino-acid chain; its full sequence is Large ribosomal subunit protein uL23 (86 aa).

This sequence belongs to the universal ribosomal protein uL23 family. Part of the 50S ribosomal subunit. Contacts protein L29.

Its function is as follows. Binds to 23S rRNA. One of the proteins that surrounds the polypeptide exit tunnel on the outside of the ribosome. The chain is Large ribosomal subunit protein uL23 from Methanosphaera stadtmanae (strain ATCC 43021 / DSM 3091 / JCM 11832 / MCB-3).